The sequence spans 440 residues: Probable exopolygalacturonase C (440 aa).

An N-terminal signal peptide occupies residues 1-21 (MLITNPALLGILASLVPLALG). N-linked (GlcNAc...) asparagine glycosylation is found at Asn-84 and Asn-151. PbH1 repeat units follow at residues 188–210 (GDDI…PFNT), 217–238 (GTNI…AVNT), and 240–261 (SHNI…SIGS). Residue Asn-219 is glycosylated (N-linked (GlcNAc...) asparagine). Asp-231 acts as the Proton donor in catalysis. His-255 is an active-site residue. Asn-271 carries an N-linked (GlcNAc...) asparagine glycan. A PbH1 4 repeat occupies 272-293 (ITNLRFEDVTVIDALYAARFKS). Residue Asn-313 is glycosylated (N-linked (GlcNAc...) asparagine). An intrachain disulfide couples Cys-389 to Cys-395. A glycan (N-linked (GlcNAc...) asparagine) is linked at Asn-434.

Belongs to the glycosyl hydrolase 28 family.

Its subcellular location is the secreted. The catalysed reaction is [(1-&gt;4)-alpha-D-galacturonosyl](n) + H2O = alpha-D-galacturonate + [(1-&gt;4)-alpha-D-galacturonosyl](n-1). Its function is as follows. Specific in hydrolyzing the terminal glycosidic bond of polygalacturonic acid and oligogalacturonates. The chain is Probable exopolygalacturonase C (pgxC) from Aspergillus fumigatus (strain ATCC MYA-4609 / CBS 101355 / FGSC A1100 / Af293) (Neosartorya fumigata).